We begin with the raw amino-acid sequence, 149 residues long: Transthyretin (149 aa).

Positions 1-20 are cleaved as a signal peptide; it reads MAFHSLLLLCLAGLVFLSEA. Cys-32 carries the sulfocysteine modification. An L-thyroxine-binding site is contributed by Lys-37. Glu-64 bears the 4-carboxyglutamate mark. Residues Glu-76 and Ser-139 each contribute to the L-thyroxine site.

This sequence belongs to the transthyretin family. As to quaternary structure, homotetramer. Dimer of dimers. In the homotetramer, subunits assemble around a central channel that can accommodate two ligand molecules. Interacts with RBP4. Sulfonation of the reactive cysteine Cys-32 enhances the stability of the native conformation of TTR, avoiding misassembly of the protein leading to amyloid formation. As to expression, highly expressed in the choroid plexus.

It is found in the secreted. Functionally, thyroid hormone-binding protein. Probably transports thyroxine from the bloodstream to the brain. The chain is Transthyretin (TTR) from Sminthopsis macroura (Stripe-faced dunnart).